Reading from the N-terminus, the 113-residue chain is Nucleoid-associated protein Athe_1143 (113 aa).

It belongs to the YbaB/EbfC family. Homodimer.

It localises to the cytoplasm. The protein localises to the nucleoid. Its function is as follows. Binds to DNA and alters its conformation. May be involved in regulation of gene expression, nucleoid organization and DNA protection. The polypeptide is Nucleoid-associated protein Athe_1143 (Caldicellulosiruptor bescii (strain ATCC BAA-1888 / DSM 6725 / KCTC 15123 / Z-1320) (Anaerocellum thermophilum)).